The primary structure comprises 343 residues: Aspartate beta-hydroxylase domain-containing protein 2 (343 aa).

Residues Met1–Asp31 lie on the Cytoplasmic side of the membrane. Residues Gly32–Val52 form a helical membrane-spanning segment. Over Gly53–Arg343 the chain is Lumenal. 2 N-linked (GlcNAc...) asparagine glycosylation sites follow: Asn77 and Asn185. Residues Trp202 and Ser246 each coordinate 2-oxoglutarate. Residue His257 participates in Fe cation binding. Arg266 to His268 is a binding site for 2-oxoglutarate. Fe cation is bound at residue His302. Arg315 contributes to the 2-oxoglutarate binding site.

It belongs to the aspartyl/asparaginyl beta-hydroxylase family. It depends on Fe cation as a cofactor.

It is found in the membrane. In terms of biological role, may function as 2-oxoglutarate-dependent dioxygenase. The protein is Aspartate beta-hydroxylase domain-containing protein 2 (Asphd2) of Rattus norvegicus (Rat).